Consider the following 231-residue polypeptide: MIKDERWEGVYSFEDSPYLMETLTDLRKIGTENISFRKGLVRLGRYMGYELTKTMEFEKMPIQTPLEKTQGVFAKDRKNVVIITILRAAFPLMEGLIKNFESAKVGIVSASRGHAPDFNIEMNYIKVPQLNPEDTVIVSDPMIATGSTLIHVLREFKDSKPKRMMIVGVLAAPEGINAVKAEFPDVEIFVTKIDEKLNKDGYIVPGLGDAGDRAFGEPFKVSMLPQMHNLE.

A GTP-binding site is contributed by 38–42 (KGLVR). 5-phospho-alpha-D-ribose 1-diphosphate contacts are provided by residues R87, R112, and 140-148 (DPMIATGST). Uracil is bound by residues I203 and 208–210 (GDA). Residue D209 participates in 5-phospho-alpha-D-ribose 1-diphosphate binding.

The protein belongs to the UPRTase family. It depends on Mg(2+) as a cofactor.

It catalyses the reaction UMP + diphosphate = 5-phospho-alpha-D-ribose 1-diphosphate + uracil. The protein operates within pyrimidine metabolism; UMP biosynthesis via salvage pathway; UMP from uracil: step 1/1. Its activity is regulated as follows. Allosterically activated by GTP. Catalyzes the conversion of uracil and 5-phospho-alpha-D-ribose 1-diphosphate (PRPP) to UMP and diphosphate. The chain is Uracil phosphoribosyltransferase from Methanococcus maripaludis (strain C6 / ATCC BAA-1332).